The chain runs to 335 residues: Terpene synthase 4 (335 aa).

Residues 103–108 carry the DDxx(x)D/E motif motif; sequence DDYIFE. The NDxxSxxxD/E motif motif lies at 243 to 251; the sequence is NDLYSFNRE.

This sequence belongs to the terpene synthase family.

It catalyses the reaction (2E,6E)-farnesyl diphosphate + H2O = (6E)-nerolidol + diphosphate. In terms of biological role, terpene synthase that converts its substrate farnesyl diphosphate (FPP) into the sesquiterpene (E)-nerolidol. The protein is Terpene synthase 4 of Dictyostelium discoideum (Social amoeba).